The chain runs to 152 residues: Ninjurin-1 (152 aa).

Position 1 is an N-acetylmethionine (Met1). The segment covering 1–10 (MDPGTEEYEL) has biased composition (acidic residues). Positions 1–30 (MDPGTEEYELNGDLRPGSPGSPDASPPRWG) are disordered. Residues 1 to 78 (MDPGTEEYEL…EQGNEFAFFV (78 aa)) are Extracellular-facing. Low complexity predominate over residues 16-27 (PGSPGSPDASPP). A phosphoserine mark is found at Ser18, Ser21, and Ser25. Residues 26–37 (PPRWGLRNRPIN) form an N-terminal adhesion motif region. The tract at residues 40 to 69 (HYANKKSAAESMLDIALLMANASQLKAVVE) is required to induce plasma membrane rupture. The interval 44–55 (KKSAAESMLDIA) is helix alpha1. Residues 58 to 74 (MANASQLKAVVEQGNEF) are helix alpha2. An N-linked (GlcNAc...) asparagine glycan is attached at Asn60. The chain crosses the membrane as a helical span at residues 79 to 103 (PLVVLISISLVLQIGVGVLLIFLVK). The Cytoplasmic portion of the chain corresponds to 104 to 113 (YDLNNPAKHA). Residues 114 to 138 (KLDFLNNLATGLVFIIVVVNIFITA) traverse the membrane as a helical segment. Residues 139–152 (FGVQKPVMDVAPRQ) are Extracellular-facing.

It belongs to the ninjurin family. Homodimer; in absence of death stimuli, forms an inactive homodimer. Homooligomer; in response to death stimuli, homooligomerizes into long, highly branched filaments and large, ring-shaped structures in the membrane. The topology shown in the entry corresponds to the activated form. In terms of processing, cleaved by MMP9 protease to generate the Secreted ninjurin-1 form. Post-translationally, N-linked glycosylation is required for homooligomerization.

Its subcellular location is the cell membrane. It is found in the synaptic cell membrane. It localises to the secreted. Its activity is regulated as follows. In response to death stimuli, homooligomerizes and disrupts membrane integrity by introducing the hydrophilic faces of alpha1 and alpha2 helices into the hydrophobic membrane. Homooligomerization and ability to mediate plasma membrane rupture is inhibited by glycine; it is unclear whether glycine directly or indirectly inhibits homooligomerization. In normal conditions, NINJ1 is autoinhibited via formation of a homodimer: in the inactive homodimer, the alpha1 and alpha2 helices (residues 44-74) form a single transmembrane region without a kink, in which hydrophilic faces of alpha1 and alpha2 helices are sequestered. Functionally, effector of various programmed cell death, such as pyroptosis and necroptosis, which mediates plasma membrane rupture (cytolysis). Oligomerizes in response to death stimuli and forms ring-like structures on the plasma membrane: acts by cutting and shedding membrane disks, like a cookie cutter, leading to membrane damage and loss that cannot be repaired by the cell. Plasma membrane rupture leads to release intracellular molecules named damage-associated molecular patterns (DAMPs) that propagate the inflammatory response. Mechanistically, mediates plasma membrane rupture by introducing hydrophilic faces of 2 alpha helices into the hydrophobic membrane. Induces plasma membrane rupture downstream of Gasdermin (GSDMA, GSDMB, GSDMC, GSDMD, or GSDME) or MLKL during pyroptosis or necroptosis, respectively. Acts as an effector of PANoptosis downstream of CASP1, CASP4, CASP8 and RIPK3. Also induces plasma membrane rupture in response to cell swelling caused by osmotic stress and ferroptosis downstream of lipid peroxidation. Acts as a regulator of Toll-like receptor 4 (TLR4) signaling triggered by lipopolysaccharide (LPS) during systemic inflammation; directly binds LPS. Involved in leukocyte migration during inflammation by promoting transendothelial migration of macrophages via homotypic binding. Promotes the migration of monocytes across the brain endothelium to central nervous system inflammatory lesions. Also acts as a homophilic transmembrane adhesion molecule involved in various processes such as axonal growth, cell chemotaxis and angiogenesis. Promotes cell adhesion by mediating homophilic interactions via its extracellular N-terminal adhesion motif (N-NAM). Involved in the progression of the inflammatory stress by promoting cell-to-cell interactions between immune cells and endothelial cells. Plays a role in nerve regeneration by promoting maturation of Schwann cells. Acts as a regulator of angiogenesis. Promotes the formation of new vessels by mediating the interaction between capillary pericyte cells and endothelial cells. Promotes osteoclasts development by enhancing the survival of prefusion osteoclasts. Also involved in striated muscle growth and differentiation. Secreted form generated by cleavage, which has chemotactic activity. Acts as an anti-inflammatory mediator by promoting monocyte recruitment, thereby ameliorating atherosclerosis. This chain is Ninjurin-1, found in Rattus norvegicus (Rat).